The following is a 297-amino-acid chain: Aspartate carbamoyltransferase catalytic subunit (297 aa).

Residues arginine 51 and threonine 52 each coordinate carbamoyl phosphate. An L-aspartate-binding site is contributed by lysine 79. Residues arginine 101, histidine 129, and glutamine 132 each coordinate carbamoyl phosphate. Positions 162 and 216 each coordinate L-aspartate. Positions 257 and 258 each coordinate carbamoyl phosphate.

It belongs to the aspartate/ornithine carbamoyltransferase superfamily. ATCase family. As to quaternary structure, heterododecamer (2C3:3R2) of six catalytic PyrB chains organized as two trimers (C3), and six regulatory PyrI chains organized as three dimers (R2).

The catalysed reaction is carbamoyl phosphate + L-aspartate = N-carbamoyl-L-aspartate + phosphate + H(+). It participates in pyrimidine metabolism; UMP biosynthesis via de novo pathway; (S)-dihydroorotate from bicarbonate: step 2/3. Functionally, catalyzes the condensation of carbamoyl phosphate and aspartate to form carbamoyl aspartate and inorganic phosphate, the committed step in the de novo pyrimidine nucleotide biosynthesis pathway. The sequence is that of Aspartate carbamoyltransferase catalytic subunit from Myxococcus xanthus (strain DK1622).